The following is a 194-amino-acid chain: FMN-dependent NADH:quinone oxidoreductase (194 aa).

FMN-binding positions include S10 and 90–93 (MYNL).

Belongs to the azoreductase type 1 family. In terms of assembly, homodimer. The cofactor is FMN.

It catalyses the reaction 2 a quinone + NADH + H(+) = 2 a 1,4-benzosemiquinone + NAD(+). The enzyme catalyses N,N-dimethyl-1,4-phenylenediamine + anthranilate + 2 NAD(+) = 2-(4-dimethylaminophenyl)diazenylbenzoate + 2 NADH + 2 H(+). Quinone reductase that provides resistance to thiol-specific stress caused by electrophilic quinones. Functionally, also exhibits azoreductase activity. Catalyzes the reductive cleavage of the azo bond in aromatic azo compounds to the corresponding amines. The polypeptide is FMN-dependent NADH:quinone oxidoreductase (Haemophilus influenzae (strain ATCC 51907 / DSM 11121 / KW20 / Rd)).